We begin with the raw amino-acid sequence, 255 residues long: Triosephosphate isomerase (255 aa).

9 to 11 (NWK) provides a ligand contact to substrate. H100 functions as the Electrophile in the catalytic mechanism. E169 acts as the Proton acceptor in catalysis. Residues G175, S208, and 229 to 230 (GG) each bind substrate.

This sequence belongs to the triosephosphate isomerase family. Homodimer.

It localises to the cytoplasm. The enzyme catalyses D-glyceraldehyde 3-phosphate = dihydroxyacetone phosphate. Its pathway is carbohydrate biosynthesis; gluconeogenesis. The protein operates within carbohydrate degradation; glycolysis; D-glyceraldehyde 3-phosphate from glycerone phosphate: step 1/1. In terms of biological role, involved in the gluconeogenesis. Catalyzes stereospecifically the conversion of dihydroxyacetone phosphate (DHAP) to D-glyceraldehyde-3-phosphate (G3P). This is Triosephosphate isomerase from Synechococcus sp. (strain JA-3-3Ab) (Cyanobacteria bacterium Yellowstone A-Prime).